Here is a 176-residue protein sequence, read N- to C-terminus: Protein GrpE (176 aa).

The interval 1-28 (MSEQKQEFENENAENSEHLQDENLQNIE) is disordered.

Belongs to the GrpE family. Homodimer.

Its subcellular location is the cytoplasm. Functionally, participates actively in the response to hyperosmotic and heat shock by preventing the aggregation of stress-denatured proteins, in association with DnaK and GrpE. It is the nucleotide exchange factor for DnaK and may function as a thermosensor. Unfolded proteins bind initially to DnaJ; upon interaction with the DnaJ-bound protein, DnaK hydrolyzes its bound ATP, resulting in the formation of a stable complex. GrpE releases ADP from DnaK; ATP binding to DnaK triggers the release of the substrate protein, thus completing the reaction cycle. Several rounds of ATP-dependent interactions between DnaJ, DnaK and GrpE are required for fully efficient folding. In Campylobacter jejuni subsp. jejuni serotype O:2 (strain ATCC 700819 / NCTC 11168), this protein is Protein GrpE.